Reading from the N-terminus, the 208-residue chain is Putative 3-methyladenine DNA glycosylase (208 aa).

Positions Met1–Glu20 are disordered.

The protein belongs to the DNA glycosylase MPG family.

This Mesorhizobium japonicum (strain LMG 29417 / CECT 9101 / MAFF 303099) (Mesorhizobium loti (strain MAFF 303099)) protein is Putative 3-methyladenine DNA glycosylase.